The sequence spans 372 residues: Putative isochorismate synthase MenF (372 aa).

Lys-119 serves as the catalytic Proton acceptor. The active-site Proton donor is Glu-175. Mg(2+) is bound by residues Glu-219 and Glu-356.

The protein belongs to the isochorismate synthase family. Mg(2+) is required as a cofactor.

The enzyme catalyses chorismate = isochorismate. It participates in quinol/quinone metabolism; 1,4-dihydroxy-2-naphthoate biosynthesis; 1,4-dihydroxy-2-naphthoate from chorismate: step 1/7. The protein operates within quinol/quinone metabolism; menaquinone biosynthesis. Its function is as follows. Catalyzes the conversion of chorismate to isochorismate. The protein is Putative isochorismate synthase MenF (menF) of Mycobacterium tuberculosis (strain CDC 1551 / Oshkosh).